A 295-amino-acid polypeptide reads, in one-letter code: GTPase Era (295 aa).

Residues 3 to 170 enclose the Era-type G domain; sequence KSGFVTIVGR…VDLMKTELPE (168 aa). The segment at 11-18 is G1; it reads GRPNVGKS. Residue 11-18 coordinates GTP; the sequence is GRPNVGKS. The interval 37–41 is G2; the sequence is QTTRN. The tract at residues 58–61 is G3; it reads DTPG. GTP-binding positions include 58-62 and 120-123; these read DTPGI and NKID. The segment at 120–123 is G4; that stretch reads NKID. The G5 stretch occupies residues 149–151; sequence IAA. The 78-residue stretch at 201–278 folds into the KH type-2 domain; it reads LRDEVPHGIA…NVKIWVKVRK (78 aa).

The protein belongs to the TRAFAC class TrmE-Era-EngA-EngB-Septin-like GTPase superfamily. Era GTPase family. In terms of assembly, monomer.

Its subcellular location is the cytoplasm. The protein localises to the cell membrane. In terms of biological role, an essential GTPase that binds both GDP and GTP, with rapid nucleotide exchange. Plays a role in 16S rRNA processing and 30S ribosomal subunit biogenesis and possibly also in cell cycle regulation and energy metabolism. This chain is GTPase Era, found in Clostridium botulinum (strain Alaska E43 / Type E3).